The primary structure comprises 181 residues: tRNA-splicing endonuclease (181 aa).

Catalysis depends on residues Tyr-118, His-126, and Lys-157.

This sequence belongs to the tRNA-intron endonuclease family. Archaeal short subfamily. As to quaternary structure, homotetramer; although the tetramer contains four active sites, only two participate in the cleavage. Therefore, it should be considered as a dimer of dimers.

It catalyses the reaction pretRNA = a 3'-half-tRNA molecule with a 5'-OH end + a 5'-half-tRNA molecule with a 2',3'-cyclic phosphate end + an intron with a 2',3'-cyclic phosphate and a 5'-hydroxyl terminus.. In terms of biological role, endonuclease that removes tRNA introns. Cleaves pre-tRNA at the 5'- and 3'-splice sites to release the intron. The products are an intron and two tRNA half-molecules bearing 2',3' cyclic phosphate and 5'-OH termini. Recognizes a pseudosymmetric substrate in which 2 bulged loops of 3 bases are separated by a stem of 4 bp. The sequence is that of tRNA-splicing endonuclease from Sulfolobus acidocaldarius (strain ATCC 33909 / DSM 639 / JCM 8929 / NBRC 15157 / NCIMB 11770).